We begin with the raw amino-acid sequence, 291 residues long: MAGSLSEIKAKIISTEKTSKITSAMRMVSSAKLVKSEQAARDFQIYASKIRQITTDLLKSELTIGSDNPMLVSRPVKKTGYIVITSDKGLVGGYNSKILKSVMDMITEYHADGDYEIISIGSVGSDFFKARGMNVAFELRGLADQPSFEQVRQIISQSVDMFVNEIFDELYVCYNHHVNSLTSQVRVQQMLPISDLVADEAAEEGVTGFELEPNRQDILDQLLPQFTESLIYGAIIDAKTAEHAAGMTAMQTATDNAKNVINDLTIQYNRARQAAITQEITEIVAGANALE.

The protein belongs to the ATPase gamma chain family. As to quaternary structure, F-type ATPases have 2 components, CF(1) - the catalytic core - and CF(0) - the membrane proton channel. CF(1) has five subunits: alpha(3), beta(3), gamma(1), delta(1), epsilon(1). CF(0) has three main subunits: a, b and c.

It is found in the cell membrane. Produces ATP from ADP in the presence of a proton gradient across the membrane. The gamma chain is believed to be important in regulating ATPase activity and the flow of protons through the CF(0) complex. This chain is ATP synthase gamma chain, found in Streptococcus pyogenes serotype M49 (strain NZ131).